Reading from the N-terminus, the 117-residue chain is Large ribosomal subunit protein eL22 (117 aa).

A phosphoserine mark is found at serine 49 and serine 50.

This sequence belongs to the eukaryotic ribosomal protein eL22 family. In terms of assembly, component of the large ribosomal subunit (LSU). Mature yeast ribosomes consist of a small (40S) and a large (60S) subunit. The 40S small subunit contains 1 molecule of ribosomal RNA (18S rRNA) and at least 33 different proteins. The large 60S subunit contains 3 rRNA molecules (25S, 5.8S and 5S rRNA) and at least 46 different proteins.

Its subcellular location is the cytoplasm. It is found in the nucleus. It localises to the nucleolus. Functionally, component of the ribosome, a large ribonucleoprotein complex responsible for the synthesis of proteins in the cell. The small ribosomal subunit (SSU) binds messenger RNAs (mRNAs) and translates the encoded message by selecting cognate aminoacyl-transfer RNA (tRNA) molecules. The large subunit (LSU) contains the ribosomal catalytic site termed the peptidyl transferase center (PTC), which catalyzes the formation of peptide bonds, thereby polymerizing the amino acids delivered by tRNAs into a polypeptide chain. The nascent polypeptides leave the ribosome through a tunnel in the LSU and interact with protein factors that function in enzymatic processing, targeting, and the membrane insertion of nascent chains at the exit of the ribosomal tunnel. This is Large ribosomal subunit protein eL22 (rpl22) from Schizosaccharomyces pombe (strain 972 / ATCC 24843) (Fission yeast).